The chain runs to 58 residues: Basic phospholipase A2 homolog PocTX (58 aa).

An intrachain disulfide couples cysteine 29 to cysteine 45.

Expressed by the venom gland.

It is found in the secreted. Its function is as follows. Wasp venom phospholipase A2 homolog that lacks enzymatic activity. In Polybia occidentalis (Paper wasp), this protein is Basic phospholipase A2 homolog PocTX.